A 589-amino-acid polypeptide reads, in one-letter code: Phenylalanine--tRNA ligase beta subunit (589 aa).

Residues 290-368 (LNPTCFKADI…IAYGYDNLKH (79 aa)) form the B5 domain. 4 residues coordinate Mg(2+): Asp346, Asp352, Glu355, and Asp356.

The protein belongs to the phenylalanyl-tRNA synthetase beta subunit family. Type 2 subfamily. Tetramer of two alpha and two beta subunits. Mg(2+) is required as a cofactor.

Its subcellular location is the cytoplasm. It is found in the nucleus. It catalyses the reaction tRNA(Phe) + L-phenylalanine + ATP = L-phenylalanyl-tRNA(Phe) + AMP + diphosphate + H(+). This is Phenylalanine--tRNA ligase beta subunit (frs1) from Schizosaccharomyces pombe (strain 972 / ATCC 24843) (Fission yeast).